A 129-amino-acid polypeptide reads, in one-letter code: Small ribosomal subunit protein uS12 (129 aa).

D89 is subject to 3-methylthioaspartic acid. The segment at 101-129 (SLDTSGVADRKQSRSKYGAKQPKAGAAKK) is disordered. A compositionally biased stretch (low complexity) spans 116 to 129 (KYGAKQPKAGAAKK).

Belongs to the universal ribosomal protein uS12 family. Part of the 30S ribosomal subunit. Contacts proteins S8 and S17. May interact with IF1 in the 30S initiation complex.

Functionally, with S4 and S5 plays an important role in translational accuracy. Interacts with and stabilizes bases of the 16S rRNA that are involved in tRNA selection in the A site and with the mRNA backbone. Located at the interface of the 30S and 50S subunits, it traverses the body of the 30S subunit contacting proteins on the other side and probably holding the rRNA structure together. The combined cluster of proteins S8, S12 and S17 appears to hold together the shoulder and platform of the 30S subunit. This chain is Small ribosomal subunit protein uS12, found in Chlorobaculum parvum (strain DSM 263 / NCIMB 8327) (Chlorobium vibrioforme subsp. thiosulfatophilum).